The chain runs to 125 residues: Large ribosomal subunit protein bL12 (125 aa).

The protein belongs to the bacterial ribosomal protein bL12 family. In terms of assembly, homodimer. Part of the ribosomal stalk of the 50S ribosomal subunit. Forms a multimeric L10(L12)X complex, where L10 forms an elongated spine to which 2 to 4 L12 dimers bind in a sequential fashion. Binds GTP-bound translation factors.

Functionally, forms part of the ribosomal stalk which helps the ribosome interact with GTP-bound translation factors. Is thus essential for accurate translation. The sequence is that of Large ribosomal subunit protein bL12 from Campylobacter jejuni (strain RM1221).